The following is a 101-amino-acid chain: MSIATIVPENAVIGQAVNIRSMETDIVSLDDRLLQAFSGSAIATAVDKQTITNRIEDPNLVTDPKELAISQEMISDYNLYVSMVSTLTRKGVGAVETLLRS.

This sequence to S.flexneri MxiI.

In terms of biological role, required for invasion of epithelial cells. This Salmonella typhimurium (strain LT2 / SGSC1412 / ATCC 700720) protein is Protein PrgJ (prgJ).